The sequence spans 708 residues: Exocyst complex component 5 (708 aa).

A2 is modified (N-acetylalanine). The stretch at 40–101 (KRLLEEFVNH…AFQHFQELDE (62 aa)) forms a coiled coil. Residues T122, T395, and T405 each carry the phosphothreonine modification. Phosphoserine is present on S412.

This sequence belongs to the SEC10 family. In terms of assembly, the exocyst complex is composed of EXOC1, EXOC2, EXOC3, EXOC4, EXOC5, EXOC6, EXOC7 and EXOC8. Interacts with EXOC3L1. Ubiquitous.

It is found in the cytoplasm. It localises to the midbody. In terms of biological role, component of the exocyst complex involved in the docking of exocytic vesicles with fusion sites on the plasma membrane. The protein is Exocyst complex component 5 (Exoc5) of Rattus norvegicus (Rat).